The chain runs to 370 residues: 4-hydroxy-3-methylbut-2-en-1-yl diphosphate synthase (flavodoxin) (370 aa).

4 residues coordinate [4Fe-4S] cluster: C268, C271, C303, and E310.

This sequence belongs to the IspG family. Requires [4Fe-4S] cluster as cofactor.

The catalysed reaction is (2E)-4-hydroxy-3-methylbut-2-enyl diphosphate + oxidized [flavodoxin] + H2O + 2 H(+) = 2-C-methyl-D-erythritol 2,4-cyclic diphosphate + reduced [flavodoxin]. Its pathway is isoprenoid biosynthesis; isopentenyl diphosphate biosynthesis via DXP pathway; isopentenyl diphosphate from 1-deoxy-D-xylulose 5-phosphate: step 5/6. Functionally, converts 2C-methyl-D-erythritol 2,4-cyclodiphosphate (ME-2,4cPP) into 1-hydroxy-2-methyl-2-(E)-butenyl 4-diphosphate. This chain is 4-hydroxy-3-methylbut-2-en-1-yl diphosphate synthase (flavodoxin), found in Bacillus licheniformis (strain ATCC 14580 / DSM 13 / JCM 2505 / CCUG 7422 / NBRC 12200 / NCIMB 9375 / NCTC 10341 / NRRL NRS-1264 / Gibson 46).